The following is a 484-amino-acid chain: Glutamate--tRNA ligase (484 aa).

Positions 11-21 match the 'HIGH' region motif; sequence PSPTGYLHIGN. The 'KMSKS' region motif lies at 252–256; the sequence is KLSKR. ATP is bound at residue K255.

The protein belongs to the class-I aminoacyl-tRNA synthetase family. Glutamate--tRNA ligase type 1 subfamily. Monomer.

Its subcellular location is the cytoplasm. It catalyses the reaction tRNA(Glu) + L-glutamate + ATP = L-glutamyl-tRNA(Glu) + AMP + diphosphate. In terms of biological role, catalyzes the attachment of glutamate to tRNA(Glu) in a two-step reaction: glutamate is first activated by ATP to form Glu-AMP and then transferred to the acceptor end of tRNA(Glu). In Staphylococcus aureus (strain Newman), this protein is Glutamate--tRNA ligase.